The primary structure comprises 37 residues: Large ribosomal subunit protein bL36c (37 aa).

This sequence belongs to the bacterial ribosomal protein bL36 family.

It is found in the plastid. Its subcellular location is the cyanelle. The polypeptide is Large ribosomal subunit protein bL36c (rpl36) (Cyanophora paradoxa).